A 340-amino-acid chain; its full sequence is Dihydroorotate dehydrogenase (quinone) (340 aa).

FMN-binding positions include Ala65–Lys69 and Thr89. Lys69 serves as a coordination point for substrate. Asn114–Phe118 provides a ligand contact to substrate. Positions 142 and 175 each coordinate FMN. Asn175 lines the substrate pocket. The active-site Nucleophile is Ser178. Substrate is bound at residue Asn180. 2 residues coordinate FMN: Lys220 and Thr248. Residue Asn249 to Thr250 coordinates substrate. Residues Gly271, Gly300, and Tyr321–Thr322 contribute to the FMN site.

Belongs to the dihydroorotate dehydrogenase family. Type 2 subfamily. Monomer. The cofactor is FMN.

It localises to the cell membrane. The enzyme catalyses (S)-dihydroorotate + a quinone = orotate + a quinol. It participates in pyrimidine metabolism; UMP biosynthesis via de novo pathway; orotate from (S)-dihydroorotate (quinone route): step 1/1. In terms of biological role, catalyzes the conversion of dihydroorotate to orotate with quinone as electron acceptor. This chain is Dihydroorotate dehydrogenase (quinone), found in Paraburkholderia xenovorans (strain LB400).